A 133-amino-acid polypeptide reads, in one-letter code: Ribosome-binding factor A (133 aa).

The protein belongs to the RbfA family. In terms of assembly, monomer. Binds 30S ribosomal subunits, but not 50S ribosomal subunits or 70S ribosomes.

It is found in the cytoplasm. One of several proteins that assist in the late maturation steps of the functional core of the 30S ribosomal subunit. Associates with free 30S ribosomal subunits (but not with 30S subunits that are part of 70S ribosomes or polysomes). Required for efficient processing of 16S rRNA. May interact with the 5'-terminal helix region of 16S rRNA. The sequence is that of Ribosome-binding factor A from Cronobacter sakazakii (strain ATCC BAA-894) (Enterobacter sakazakii).